The chain runs to 169 residues: Methane monooxygenase component A gamma chain (169 aa).

As to quaternary structure, m.trichosporium has two forms of methane monooxygenase, a soluble and a membrane-bound type. The soluble type consists of four components (A to D): protein A, comprising three chains, in an alpha-2, beta-2, gamma-2 configuration, is a nonheme iron protein containing an unusual mu-hydroxo bridge structure at its active site and interacts with both oxygen and methane.

It catalyses the reaction methane + NADH + O2 + H(+) = methanol + NAD(+) + H2O. The catalysed reaction is methane + NADPH + O2 + H(+) = methanol + NADP(+) + H2O. In terms of biological role, responsible for the initial oxygenation of methane to methanol in methanotrophs. It also catalyzes the monohydroxylation of a variety of unactivated alkenes, alicyclic, aromatic and heterocyclic compounds. This chain is Methane monooxygenase component A gamma chain (mmoZ), found in Methylosinus trichosporium.